Reading from the N-terminus, the 251-residue chain is uncharacterized protein (251 aa).

This is an uncharacterized protein from Homo sapiens (Human).